A 1319-amino-acid chain; its full sequence is Uromodulin-like 1 (1319 aa).

The first 22 residues, 1–22 (MMSRTVRLVLLALACTVDLSQA), serve as a signal peptide directing secretion. Topologically, residues 23 to 1273 (SGFTENGLSL…CTKPVLGTGY (1251 aa)) are extracellular. The region spanning 34-107 (SYQLCSYPVT…FEQLGLYCVL (74 aa)) is the EMI domain. 3 cysteine pairs are disulfide-bonded: C38-C95, C62-C71, and C94-C105. Residue N90 is glycosylated (N-linked (GlcNAc...) asparagine). N110 carries N-linked (GlcNAc...) asparagine glycosylation. The WAP domain maps to 115–159 (FASRPGVCPTAEAEPLSPSCSLDTDCSGLQKCCSWPGGRHCVSPT). Residues N172, N193, and N243 are each glycosylated (N-linked (GlcNAc...) asparagine). The region spanning 265–306 (DVNECLHSELQACSVREQCRNLEGSYQCVSSQRLNHTDEDCP) is the EGF-like 1; calcium-binding domain. 2 cysteine pairs are disulfide-bonded: C269/C283 and C277/C292. The Fibronectin type-III 1 domain occupies 307–391 (PIRDFVALNV…ATLVVKTDAQ (85 aa)). N-linked (GlcNAc...) asparagine glycosylation is present at N315. Residues 389-503 (DAQVFQVTIR…QRTFVQDWDE (115 aa)) form the SEA 1 domain. Residues 500–545 (DWDECAHSSEHDCHPSARCINLEGSYTCQCLTARDASPSRAGRVCE) form the EGF-like 2; calcium-binding domain. Cystine bridges form between C504–C518, C512–C527, and C529–C544. Disordered regions lie at residues 569–649 (TGIT…ITKD) and 664–703 (HSSP…PESP). The segment covering 619 to 632 (TGQGQTHGTHQGTT) has biased composition (low complexity). Residues 638–647 (TTRESQELIT) show a composition bias toward basic and acidic residues. A compositionally biased stretch (polar residues) spans 664–678 (HSSPTWKTPPNSTRL). Residues 709-795 (PIGKVTVSNV…QLKVRTVAQK (87 aa)) enclose the Fibronectin type-III 2 domain. Residues N717 and N757 are each glycosylated (N-linked (GlcNAc...) asparagine). Positions 792–904 (VAQKLAGNVR…GKTFMQDYNE (113 aa)) constitute an SEA 2 domain. Residues 901–945 (DYNECDMKEDDCAPGTCRNTFGSFTCSCDEGGPDSQVEYSGRSCD) form the EGF-like 3; calcium-binding domain. 3 cysteine pairs are disulfide-bonded: C905–C917, C912–C926, and C928–C944. The interval 939 to 966 (YSGRSCDGDPSGNMTQTPGSEWSPTPAG) is disordered. Positions 950-961 (GNMTQTPGSEWS) are enriched in polar residues. N-linked (GlcNAc...) asparagine glycosylation is present at N951. Positions 995 to 1238 (SCEIETVIIT…NSCRISCNDF (244 aa)) constitute a ZP domain. C1160 and C1218 are oxidised to a cystine. A helical transmembrane segment spans residues 1274 to 1294 (IILLAAAALLVVAGATTLLIL). Over 1295-1319 (RYQRVRQKYNLRIQTDDFSYQVFSQ) the chain is Cytoplasmic.

It localises to the cell membrane. The sequence is that of Uromodulin-like 1 (Umodl1) from Mus musculus (Mouse).